The chain runs to 500 residues: Allene oxide synthase 3 (500 aa).

Positions 1 to 26 (MAPPPVNSGDAAAAATGEKSKLSPSG) are disordered. Substrate contacts are provided by residues 297–298 (FN), Lys-304, and 365–368 (PVEF). Cys-452 is a heme binding site.

It belongs to the cytochrome P450 family. Requires heme as cofactor. In terms of tissue distribution, not expressed in dark-grown seedlings.

The enzyme catalyses (13S)-hydroperoxy-(9Z,11E,15Z)-octadecatrienoate = (9Z,13S,15Z)-12,13-epoxyoctadeca-9,11,15-trienoate + H2O. It participates in lipid metabolism; oxylipin biosynthesis. Its function is as follows. Involved in the biosynthesis of jasmonic acid, a growth regulator that is implicated also as a signaling molecule in plant defense. Converts 13-hydroperoxylinolenic acid to 12,13-epoxylinolenic acid. The sequence is that of Allene oxide synthase 3 (CYP74A3) from Oryza sativa subsp. japonica (Rice).